The following is a 277-amino-acid chain: MKQYLDLLKHITETGVAKGDRTGTGTRSVFGYQMRFNLEEGFPLVTTKKLHLKSIVYELLWFLNGDTNNQYLKEHGVRIWDEWATETGDLGPIYGRQWVAWEKPNGDTINQIEEVIQTLKKNPNSRRMLVSAWNPADLPDESMSPQENVKQGRMALATCHAFFQFYVANGKLSCQLYQRSADTFLGVPFNIASYALLTHMIAQQTDLEVGEFVWTGGDVHLYNNTLEQAELQMSRTPYALPKLKIKRKPPSIFDYEFDDFEIEGYESHPHIKAVVSV.

Position 21 (arginine 21) interacts with dUMP. Position 51 (histidine 51) interacts with (6R)-5,10-methylene-5,6,7,8-tetrahydrofolate. 126 to 127 (RR) provides a ligand contact to dUMP. Catalysis depends on cysteine 159, which acts as the Nucleophile. DUMP is bound by residues 179–182 (RSAD), asparagine 190, and 220–222 (HLY). Residue aspartate 182 coordinates (6R)-5,10-methylene-5,6,7,8-tetrahydrofolate. Serine 276 serves as a coordination point for (6R)-5,10-methylene-5,6,7,8-tetrahydrofolate.

This sequence belongs to the thymidylate synthase family. Bacterial-type ThyA subfamily. Homodimer.

The protein localises to the cytoplasm. It catalyses the reaction dUMP + (6R)-5,10-methylene-5,6,7,8-tetrahydrofolate = 7,8-dihydrofolate + dTMP. The protein operates within pyrimidine metabolism; dTTP biosynthesis. Functionally, catalyzes the reductive methylation of 2'-deoxyuridine-5'-monophosphate (dUMP) to 2'-deoxythymidine-5'-monophosphate (dTMP) while utilizing 5,10-methylenetetrahydrofolate (mTHF) as the methyl donor and reductant in the reaction, yielding dihydrofolate (DHF) as a by-product. This enzymatic reaction provides an intracellular de novo source of dTMP, an essential precursor for DNA biosynthesis. The polypeptide is Thymidylate synthase (Hydrogenovibrio crunogenus (strain DSM 25203 / XCL-2) (Thiomicrospira crunogena)).